Reading from the N-terminus, the 192-residue chain is Ion-translocating oxidoreductase complex subunit A (192 aa).

Helical transmembrane passes span 5–25 (ILLI…FLGL), 39–59 (VGMG…AYLV), 63–83 (ILIP…VIAV), 102–122 (LLGI…VALL), 134–154 (VVYG…FAAL), and 171–191 (AIAL…TGLV).

The protein belongs to the NqrDE/RnfAE family. The complex is composed of six subunits: RnfA, RnfB, RnfC, RnfD, RnfE and RnfG.

The protein localises to the cell inner membrane. Part of a membrane-bound complex that couples electron transfer with translocation of ions across the membrane. This chain is Ion-translocating oxidoreductase complex subunit A, found in Haemophilus influenzae (strain 86-028NP).